The sequence spans 524 residues: Solute carrier family 2, facilitated glucose transporter member 2 (524 aa).

Topologically, residues 1–6 (MTEDKI) are cytoplasmic. Residues 7–26 (TGTLVFAVLTAVLGSFQFGY) traverse the membrane as a helical segment. Over 27-89 (DIGVINAPQQ…SWAEEETTAS (63 aa)) the chain is Extracellular. A glycan (N-linked (GlcNAc...) asparagine) is linked at Asn-62. Residues 90–115 (ASLIIMLWSLSVSIFAIGGMIASFFG) traverse the membrane as a helical segment. Topologically, residues 116–126 (GMLGDRLGRIK) are cytoplasmic. The chain crosses the membrane as a helical span at residues 127–145 (AMLVANILSLVGALLMWFS). Residues 146–150 (KLGPS) lie on the Extracellular side of the membrane. The helical transmembrane segment at 151 to 176 (HILIISGRGISGLYCGLISGLVPMYI) threads the bilayer. The Cytoplasmic segment spans residues 177-187 (GEIAPTKFRGA). Residues 188 to 211 (IGALHQLAIVTGILVSQIIGLDFL) form a helical membrane-spanning segment. Gln-193 is a binding site for D-glucose. The Extracellular portion of the chain corresponds to 212–216 (LGNHE). Residues 217 to 239 (LWHILLGLSAVPAVLQSLMLFFC) form a helical membrane-spanning segment. Residues 240 to 303 (PESPRYLYIK…LFTNSSYRQP (64 aa)) are Cytoplasmic-facing. Residues 304-327 (ILVALMLHMAQQFSGINGIFYYST) form a helical membrane-spanning segment. Residues 314 to 315 (QQ) and Asn-320 each bind D-glucose. Residues 328–338 (SIFQTAGISQP) lie on the Extracellular side of the membrane. A helical membrane pass occupies residues 339-360 (VYATIGVGAINTIFTALSVFLV). D-glucose is bound at residue Asn-349. The Cytoplasmic portion of the chain corresponds to 361–366 (EKAGRR). A helical membrane pass occupies residues 367–389 (SLFLIGMSGMFVCAIFMSVGLVL). The Extracellular portion of the chain corresponds to 390–394 (LDKLP). A helical membrane pass occupies residues 395–413 (WMSYVSMTAIFLFVSFFEI). Positions 412 and 420 each coordinate D-glucose. The Cytoplasmic segment spans residues 414-433 (GPGPIPWFMVAEFFSQGPRP). Residues 434–458 (AALAMAAFSNWTCNFIIALCFQYIA) form a helical membrane-spanning segment. Over 459–463 (DFCGP) the chain is Extracellular. Residues 464–482 (YVFFLFAGVVLVFTLFTFF) form a helical membrane-spanning segment. The Cytoplasmic portion of the chain corresponds to 483–524 (KVPETKGKSFEEIAAEFQKKSGSAQSPKAAVEMEFLGATETV). Residue Thr-523 is modified to Phosphothreonine.

This sequence belongs to the major facilitator superfamily. Sugar transporter (TC 2.A.1.1) family. Glucose transporter subfamily. Post-translationally, N-glycosylated; required for stability and retention at the cell surface of pancreatic beta cells.

Its subcellular location is the cell membrane. It carries out the reaction D-glucose(out) = D-glucose(in). It catalyses the reaction D-fructose(out) = D-fructose(in). The enzyme catalyses L-dehydroascorbate(out) = L-dehydroascorbate(in). The catalysed reaction is D-galactose(in) = D-galactose(out). With respect to regulation, D-glucose and maltose competitively inhibit fructose transport. D-glucose, D-fructose and maltose inhibit deoxyglucose transport. Its function is as follows. Facilitative hexose transporter that mediates the transport of glucose, fructose and galactose. Likely mediates the bidirectional transfer of glucose across the plasma membrane of hepatocytes and is responsible for uptake of glucose by the beta cells; may comprise part of the glucose-sensing mechanism of the beta cell. May also participate with the Na(+)/glucose cotransporter in the transcellular transport of glucose in the small intestine and kidney. Also able to mediate the transport of dehydroascorbate. This is Solute carrier family 2, facilitated glucose transporter member 2 from Sus scrofa (Pig).